The sequence spans 88 residues: Small ribosomal subunit protein bS20 (88 aa).

This sequence belongs to the bacterial ribosomal protein bS20 family.

Its function is as follows. Binds directly to 16S ribosomal RNA. The protein is Small ribosomal subunit protein bS20 of Bradyrhizobium diazoefficiens (strain JCM 10833 / BCRC 13528 / IAM 13628 / NBRC 14792 / USDA 110).